The chain runs to 682 residues: DNA-directed RNA polymerase subunit beta' (682 aa).

Zn(2+) is bound by residues Cys69, Cys71, Cys87, and Cys90. Residues Asp489, Asp491, and Asp493 each contribute to the Mg(2+) site.

This sequence belongs to the RNA polymerase beta' chain family. RpoC1 subfamily. As to quaternary structure, in plastids the minimal PEP RNA polymerase catalytic core is composed of four subunits: alpha, beta, beta', and beta''. When a (nuclear-encoded) sigma factor is associated with the core the holoenzyme is formed, which can initiate transcription. It depends on Mg(2+) as a cofactor. Zn(2+) serves as cofactor.

It localises to the plastid. The protein localises to the chloroplast. It carries out the reaction RNA(n) + a ribonucleoside 5'-triphosphate = RNA(n+1) + diphosphate. DNA-dependent RNA polymerase catalyzes the transcription of DNA into RNA using the four ribonucleoside triphosphates as substrates. This chain is DNA-directed RNA polymerase subunit beta', found in Brachypodium distachyon (Purple false brome).